A 176-amino-acid chain; its full sequence is MPLRPGRCYRKFSGPAYTRREYIPGIPMPKITKFVMGNVNGDYDYELRLITTEKGQIRHNALEAARVIALKYLSKKLASEQNFALVVTKYPHHVIRENKMMAFAGADRLQDGMRLSFGKPIGTAARLEKLGELVMYVRVKKEHLEAAKEALKIASSKLPIRTKIEISALNKEAAAQ.

The protein belongs to the universal ribosomal protein uL16 family.

The protein is Large ribosomal subunit protein uL16 of Sulfolobus acidocaldarius (strain ATCC 33909 / DSM 639 / JCM 8929 / NBRC 15157 / NCIMB 11770).